The following is a 283-amino-acid chain: MLIIETLPLLRQQIRRLRMEGKRVALVPTMGNLHNGHMKLVDEAKARADVVVVSIFVNPMQFDRPEDLARYPRTLQEDCEKLNKRKVDLVFAPSVKEIYPNGTETHTYVDVPGLSTMLEGASRPGHFRGVSTIVSKLFNLVQPDIACFGEKDFQQLALIRKMVADMGFDIEIVGVPIMRAKDGLALSSRNGYLTAEQRKIAPGLYKVLSSIADKLQAGERDLDEIITIAGQELNEKGFRADDIQIRDADTLLEVSETSKRAVILVAAWLGDARLIDNKMVELA.

30–37 provides a ligand contact to ATP; the sequence is MGNLHNGH. Residue His37 is the Proton donor of the active site. Residue Gln61 participates in (R)-pantoate binding. Beta-alanine is bound at residue Gln61. Residue 149-152 coordinates ATP; it reads GEKD. Gln155 provides a ligand contact to (R)-pantoate. An ATP-binding site is contributed by 186-189; the sequence is LSSR.

This sequence belongs to the pantothenate synthetase family. Homodimer.

It localises to the cytoplasm. The enzyme catalyses (R)-pantoate + beta-alanine + ATP = (R)-pantothenate + AMP + diphosphate + H(+). The protein operates within cofactor biosynthesis; (R)-pantothenate biosynthesis; (R)-pantothenate from (R)-pantoate and beta-alanine: step 1/1. In terms of biological role, catalyzes the condensation of pantoate with beta-alanine in an ATP-dependent reaction via a pantoyl-adenylate intermediate. The protein is Pantothenate synthetase of Shigella flexneri serotype 5b (strain 8401).